The chain runs to 148 residues: MKRELKVKPIENGTVIDHISGSKALKVYKILNIEEKLPITLALNVPSKKGVTKDILKIEGLELSKDDVNKIALISPDATINIIKEGKVIKKFKVDIPKRIDGIIKCTNPNCITNKENIESRFSIEQKNTLKIRCEYCEKFINSIIISK.

4 residues coordinate Zn(2+): Cys106, Cys111, Cys134, and Cys137.

The protein belongs to the PyrI family. Contains catalytic and regulatory chains. Requires Zn(2+) as cofactor.

In terms of biological role, involved in allosteric regulation of aspartate carbamoyltransferase. This is Aspartate carbamoyltransferase regulatory chain from Methanococcus maripaludis (strain DSM 14266 / JCM 13030 / NBRC 101832 / S2 / LL).